Reading from the N-terminus, the 126-residue chain is Holo-[acyl-carrier-protein] synthase (126 aa).

Aspartate 9 and glutamate 58 together coordinate Mg(2+).

The protein belongs to the P-Pant transferase superfamily. AcpS family. The cofactor is Mg(2+).

The protein resides in the cytoplasm. It catalyses the reaction apo-[ACP] + CoA = holo-[ACP] + adenosine 3',5'-bisphosphate + H(+). Its function is as follows. Transfers the 4'-phosphopantetheine moiety from coenzyme A to a Ser of acyl-carrier-protein. The protein is Holo-[acyl-carrier-protein] synthase of Escherichia coli O127:H6 (strain E2348/69 / EPEC).